The following is a 73-amino-acid chain: Venom peptide La1 (73 aa).

Lys-73 is modified (lysine amide).

Belongs to the scorpion La1-like peptide family. Post-translationally, contains 4 disulfide bonds. Expressed by the venom gland.

The protein resides in the secreted. In terms of biological role, not toxic to insect. The chain is Venom peptide La1 from Liocheles australasiae (Dwarf wood scorpion).